A 135-amino-acid polypeptide reads, in one-letter code: Transcriptional regulator HosA (135 aa).

The 131-residue stretch at 4 to 134 (RNKAFHQLRQ…FVQLVRKMMN (131 aa)) folds into the HTH marR-type domain. Positions 48–71 (QVALIEAAVSTKATLAEMLARMEN) form a DNA-binding region, H-T-H motif.

Functionally, involved in the temperature-dependent positive control of flagellum-driven swimming motility and cellular aggregation. Regulates fliC expression by directly interacting with fliC promoter. The protein is Transcriptional regulator HosA (hosA) of Escherichia coli O157:H7.